Reading from the N-terminus, the 468-residue chain is Elongation factor 1-alpha (468 aa).

The 239-residue stretch at 6–244 folds into the tr-type G domain; that stretch reads KPHINIVVIG…DNIPLPARPS (239 aa). Residues 15–22 form a G1 region; that stretch reads GHVDSGKS. A GTP-binding site is contributed by 15–22; sequence GHVDSGKS. Residues 71–75 are G2; that stretch reads GITID. Residues 92 to 95 are G3; sequence DAPG. GTP contacts are provided by residues 92-96 and 154-157; these read DAPGH and NKID. Residues 154–157 are G4; it reads NKID. The tract at residues 195-197 is G5; it reads SGW. 5-glutamyl glycerylphosphorylethanolamine is present on residues E303 and E376.

The protein belongs to the TRAFAC class translation factor GTPase superfamily. Classic translation factor GTPase family. EF-Tu/EF-1A subfamily.

Its subcellular location is the cytoplasm. This protein promotes the GTP-dependent binding of aminoacyl-tRNA to the A-site of ribosomes during protein biosynthesis. This is Elongation factor 1-alpha from Hydra vulgaris (Hydra).